The chain runs to 119 residues: Methylglyoxal synthase (119 aa).

The MGS-like domain occupies 1–119 (MRIALIAHDK…GTADLIIRQF (119 aa)). Residues His-8, Lys-12, 34-37 (TGTT), and 54-55 (SG) each bind substrate. Catalysis depends on Asp-60, which acts as the Proton donor/acceptor. His-87 contacts substrate.

This sequence belongs to the methylglyoxal synthase family.

The enzyme catalyses dihydroxyacetone phosphate = methylglyoxal + phosphate. Its function is as follows. Catalyzes the formation of methylglyoxal from dihydroxyacetone phosphate. The chain is Methylglyoxal synthase from Clostridium botulinum (strain Alaska E43 / Type E3).